Reading from the N-terminus, the 262-residue chain is Electron transfer flavoprotein beta subunit lysine methyltransferase (262 aa).

The N-terminal 38 residues, 1–38, are a transit peptide targeting the mitochondrion; it reads MALSLGWKAHRNHCGLLLQALRSSGLLLFPCGQCPWRG.

This sequence belongs to the methyltransferase superfamily. ETFBKMT family. Interacts with HSPD1; this protein may possibly be a methylation substrate.

The protein localises to the cytoplasm. It localises to the mitochondrion matrix. The enzyme catalyses L-lysyl-[protein] + 3 S-adenosyl-L-methionine = N(6),N(6),N(6)-trimethyl-L-lysyl-[protein] + 3 S-adenosyl-L-homocysteine + 3 H(+). Protein-lysine methyltransferase that selectively trimethylates the flavoprotein ETFB in mitochondria. Thereby, may negatively regulate the function of ETFB in electron transfer from Acyl-CoA dehydrogenases to the main respiratory chain. The chain is Electron transfer flavoprotein beta subunit lysine methyltransferase from Homo sapiens (Human).